A 187-amino-acid chain; its full sequence is 2-oxoglutarate synthase subunit KorC (187 aa).

In terms of assembly, heterotetramer of the KorA, KorB, KorC and KorD subunits.

The enzyme catalyses 2 oxidized [2Fe-2S]-[ferredoxin] + 2-oxoglutarate + CoA = succinyl-CoA + 2 reduced [2Fe-2S]-[ferredoxin] + CO2 + H(+). This is 2-oxoglutarate synthase subunit KorC (korC) from Archaeoglobus fulgidus (strain ATCC 49558 / DSM 4304 / JCM 9628 / NBRC 100126 / VC-16).